We begin with the raw amino-acid sequence, 401 residues long: Argininosuccinate synthase (401 aa).

A9 to S17 lines the ATP pocket. Y86 lines the L-citrulline pocket. G116 provides a ligand contact to ATP. Residues T118, N122, and D123 each coordinate L-aspartate. Position 122 (N122) interacts with L-citrulline. Residues R126, S174, S183, E259, and Y271 each coordinate L-citrulline.

Belongs to the argininosuccinate synthase family. Type 1 subfamily. As to quaternary structure, homotetramer.

It localises to the cytoplasm. It catalyses the reaction L-citrulline + L-aspartate + ATP = 2-(N(omega)-L-arginino)succinate + AMP + diphosphate + H(+). The protein operates within amino-acid biosynthesis; L-arginine biosynthesis; L-arginine from L-ornithine and carbamoyl phosphate: step 2/3. The chain is Argininosuccinate synthase from Bacillus cereus (strain AH187).